The following is a 154-amino-acid chain: Endoribonuclease YbeY (154 aa).

Residues His113, His117, and His123 each contribute to the Zn(2+) site.

The protein belongs to the endoribonuclease YbeY family. Zn(2+) is required as a cofactor.

Its subcellular location is the cytoplasm. Functionally, single strand-specific metallo-endoribonuclease involved in late-stage 70S ribosome quality control and in maturation of the 3' terminus of the 16S rRNA. In Anaplasma marginale (strain Florida), this protein is Endoribonuclease YbeY.